Here is a 546-residue protein sequence, read N- to C-terminus: EH domain-containing protein 2 (546 aa).

2 consecutive EF-hand domains span residues 15-50 (EHQKIYKEWFNIADSDGDGRVSGNDATKFFAMSKLS) and 51-84 (RQELKQVWAVADSKRQGFLGLSEFITAMKLVSLA). The EH domain occupies 16–94 (HQKIYKEWFN…QEGHEITSDL (79 aa)). Ca(2+) is bound by residues Asp28, Asp30, Asp32, Arg34, Asp39, Asp62, and Glu73. A Dynamin-type G domain is found at 194–430 (FDAKPMVMLL…LLADLMDVPK (237 aa)). Residues 204 to 211 (GQYSTGKT) are G1 motif. 204 to 211 (GQYSTGKT) lines the GTP pocket. Residues 230–231 (EP) are G2 motif. Positions 292 to 295 (DTPG) are G3 motif. GTP is bound by residues 292–296 (DTPGV) and Lys359. The G4 motif stretch occupies residues 358–361 (NKAD). Position 382 (Val382) is a region of interest, G5 motif. A GTP-binding site is contributed by 395 to 398 (SFND). A Nuclear localization signal motif is present at residues 429–436 (PKKACDRK). A coiled-coil region spans residues 467–490 (KSKAQQRLMDNLEEEFGKVQREFH).

It belongs to the TRAFAC class dynamin-like GTPase superfamily. Dynamin/Fzo/YdjA family. EHD subfamily. Homooligomer, and heterooligomer with EHD1. Interacts with AP-4 complex subunit sigma (At2g19790).

It localises to the endosome membrane. Its subcellular location is the cell membrane. The protein resides in the nucleus. It is found in the cytoplasm. The enzyme catalyses GTP + H2O = GDP + phosphate + H(+). Functionally, involved in endocytosis negative regulation, probably by influencing actin organization. Acts in early endocytic membrane fusion and membrane trafficking of recycling endosomes. Exhibits an inhibitory effect on endocytosis when over-expressed. This Arabidopsis thaliana (Mouse-ear cress) protein is EH domain-containing protein 2.